Reading from the N-terminus, the 342-residue chain is L-threonine 3-dehydrogenase (342 aa).

Residue C38 participates in Zn(2+) binding. Catalysis depends on charge relay system residues T40 and H43. Zn(2+) is bound by residues H63, E64, C93, C96, C99, and C107. Residues I175, D195, R200, 262 to 264 (LGI), and 286 to 287 (IY) contribute to the NAD(+) site.

The protein belongs to the zinc-containing alcohol dehydrogenase family. As to quaternary structure, homotetramer. Requires Zn(2+) as cofactor.

Its subcellular location is the cytoplasm. It catalyses the reaction L-threonine + NAD(+) = (2S)-2-amino-3-oxobutanoate + NADH + H(+). It functions in the pathway amino-acid degradation; L-threonine degradation via oxydo-reductase pathway; glycine from L-threonine: step 1/2. Catalyzes the NAD(+)-dependent oxidation of L-threonine to 2-amino-3-ketobutyrate. The protein is L-threonine 3-dehydrogenase of Burkholderia cenocepacia (strain ATCC BAA-245 / DSM 16553 / LMG 16656 / NCTC 13227 / J2315 / CF5610) (Burkholderia cepacia (strain J2315)).